The sequence spans 263 residues: MNYLNKIRIENPLTICYTNDVVKNFTANGLLSIGASPAMSEAPEEAEEFYKVAQALLINIGTLTAENEQDIIAIAQTANEAGLPIVFDPVAVGASTYRKQFCKLLLKSAKVSVIKGNASEILALIDDTATMKGTDSDANLDAVAIAKKAYATYKTAIVITGKEDVIVQDNKAFVLANGSPLLARVTGAGCLLGGVIAGFLFRETEPDIEALIEAVSVFNIAAEVAAENENCGGPGTFSPLLLDTLYHLNETTYQQRIRIQEVE.

M39 is a binding site for substrate. Positions 115 and 160 each coordinate ATP. G187 is a binding site for substrate.

Belongs to the Thz kinase family. Mg(2+) is required as a cofactor.

The enzyme catalyses 5-(2-hydroxyethyl)-4-methylthiazole + ATP = 4-methyl-5-(2-phosphooxyethyl)-thiazole + ADP + H(+). It participates in cofactor biosynthesis; thiamine diphosphate biosynthesis; 4-methyl-5-(2-phosphoethyl)-thiazole from 5-(2-hydroxyethyl)-4-methylthiazole: step 1/1. Functionally, catalyzes the phosphorylation of the hydroxyl group of 4-methyl-5-beta-hydroxyethylthiazole (THZ). This chain is Hydroxyethylthiazole kinase, found in Staphylococcus aureus (strain COL).